Here is a 157-residue protein sequence, read N- to C-terminus: S-ribosylhomocysteine lyase (157 aa).

Residues His-54, His-58, and Cys-126 each contribute to the Fe cation site.

Belongs to the LuxS family. Homodimer. Fe cation is required as a cofactor.

It carries out the reaction S-(5-deoxy-D-ribos-5-yl)-L-homocysteine = (S)-4,5-dihydroxypentane-2,3-dione + L-homocysteine. Its function is as follows. Involved in the synthesis of autoinducer 2 (AI-2) which is secreted by bacteria and is used to communicate both the cell density and the metabolic potential of the environment. The regulation of gene expression in response to changes in cell density is called quorum sensing. Catalyzes the transformation of S-ribosylhomocysteine (RHC) to homocysteine (HC) and 4,5-dihydroxy-2,3-pentadione (DPD). The chain is S-ribosylhomocysteine lyase from Bacillus cytotoxicus (strain DSM 22905 / CIP 110041 / 391-98 / NVH 391-98).